We begin with the raw amino-acid sequence, 294 residues long: tRNA dimethylallyltransferase (294 aa).

10–17 (GPTAVGKT) contributes to the ATP binding site. 12–17 (TAVGKT) is a substrate binding site. Positions 35–38 (DSQQ) are interaction with substrate tRNA.

This sequence belongs to the IPP transferase family. Monomer. The cofactor is Mg(2+).

The catalysed reaction is adenosine(37) in tRNA + dimethylallyl diphosphate = N(6)-dimethylallyladenosine(37) in tRNA + diphosphate. Functionally, catalyzes the transfer of a dimethylallyl group onto the adenine at position 37 in tRNAs that read codons beginning with uridine, leading to the formation of N6-(dimethylallyl)adenosine (i(6)A). The protein is tRNA dimethylallyltransferase of Streptococcus suis (strain 98HAH33).